Consider the following 166-residue polypeptide: Ribonuclease H2 subunit C (166 aa).

Position 1 is an N-acetylmethionine (M1).

The protein belongs to the RNase H2 subunit C family. In terms of assembly, the RNase H2 complex is a heterotrimer composed of the catalytic subunit RNASEH2A and the non-catalytic subunits RNASEH2B and RNASEH2C.

It localises to the nucleus. Functionally, non catalytic subunit of RNase H2, an endonuclease that specifically degrades the RNA of RNA:DNA hybrids. Participates in DNA replication, possibly by mediating the removal of lagging-strand Okazaki fragment RNA primers during DNA replication. Mediates the excision of single ribonucleotides from DNA:RNA duplexes. This chain is Ribonuclease H2 subunit C (Rnaseh2c), found in Mus musculus (Mouse).